Here is a 560-residue protein sequence, read N- to C-terminus: MSNMDIDGINAGTIDKTPEETTSGTSGATRPIIRPATLAPPSNKRTRNPSPERATTSSEADIGRRTQKKQTPTEIKKSVYNMVVKLGEFYNQMMVKAGLNDDMERNLIQNAHAVERILLAATDDKKTEFQKKKNARDVKEGKEEIDHNKTGGTFYKMVRDDKTIYFSPIRITFLKEEVKTMYKTTMGSDGFSGLNHIMIGHSQMNDVCFQRSKALKRVGLDPSLISTFAGSTLPRRSGTTGVATKGGGTLVAEAIRFIGRAMADRGLLRDIKAKTAYEKILLNLKNKCSAPQQKALVDQVIGSRNPGIADIEDLTLLARSMVVVRPSVASKVVLPISIYAKIPQLGFNVEEYSMVGYEAMALYNMATPVSILRMGDDAKDKSQLFFMSCFGAAYEDLRVLSALTGTEFKPRSALKCKGFHVPAKEQVEGMGAALMSIKLQFWAPMTRSGGNEVGGDGGSGQISCNPVFAVERPIALSKQAVRRMLSMNIEGRDADVKGNLLKMMNDSMAKKTNGNAFIGKKMFQISDKNKTNPIEIQIKQTIPNFFFGRDTAEDYDDLDY.

Positions 1–74 are disordered; sequence MSNMDIDGIN…RTQKKQTPTE (74 aa).

This sequence belongs to the influenza viruses nucleoprotein family. In terms of assembly, homomultimerizes to form the nucleocapsid. May bind host exportin-1/XPO1. Binds to viral genomic RNA. Protein-RNA contacts are mediated by a combination of electrostatic interactions between positively charged residues and the phosphate backbone and planar interactions between aromatic side chains and bases. Post-translationally, late in virus-infected cells, may be cleaved from a 56-kDa protein to a 53-kDa protein by a cellular caspase. This cleavage might be a marker for the onset of apoptosis in infected cells or have a specific function in virus host interaction.

The protein localises to the virion. It localises to the host nucleus. Encapsidates the negative strand viral RNA, protecting it from nucleases. The encapsidated genomic RNA is termed the ribonucleoprotein (RNP) and serves as template for transcription and replication. The RNP needs to be localized in the host nucleus to start an infectious cycle, but is too large to diffuse through the nuclear pore complex. NP comprises at least 2 nuclear localization signals that are responsible for the active RNP import into the nucleus through cellular importin alpha/beta pathway. Later in the infection, nclear export of RNPs are mediated through viral proteins NEP interacting with M1 which binds nucleoproteins. It is possible that nucleoprotein binds directly host exportin-1/XPO1 and plays an active role in RNPs nuclear export. M1 interaction with RNP seems to hide nucleoprotein's nuclear localization signals. Soon after a virion infects a new cell, M1 dissociates from the RNP under acidification of the virion driven by M2 protein. Dissociation of M1 from RNP unmasks nucleoprotein's nuclear localization signals, targeting the RNP to the nucleus. The protein is Nucleoprotein of Homo sapiens (Human).